A 317-amino-acid chain; its full sequence is Pseudouridine-5'-phosphate glycosidase (317 aa).

Glu-27 (proton donor) is an active-site residue. Substrate-binding residues include Lys-89 and Val-109. Mn(2+) is bound at residue Asp-141. 143–145 (SAD) contacts substrate. Lys-162 serves as the catalytic Nucleophile.

Belongs to the pseudouridine-5'-phosphate glycosidase family. As to quaternary structure, homotrimer. It depends on Mn(2+) as a cofactor.

It catalyses the reaction D-ribose 5-phosphate + uracil = psi-UMP + H2O. Functionally, catalyzes the reversible cleavage of pseudouridine 5'-phosphate (PsiMP) to ribose 5-phosphate and uracil. Functions biologically in the cleavage direction, as part of a pseudouridine degradation pathway. This Sorangium cellulosum (strain So ce56) (Polyangium cellulosum (strain So ce56)) protein is Pseudouridine-5'-phosphate glycosidase.